Here is a 470-residue protein sequence, read N- to C-terminus: Protein C-ets-2 (470 aa).

The 86-residue stretch at 85–170 (ATFSGFKKEQ…EHLEQMIKEN (86 aa)) folds into the PNT domain. At Ser225 the chain carries Phosphoserine. The disordered stretch occupies residues 270 to 291 (ASGKPRDHDSAETGGDSFESSE). Phosphoserine is present on residues Ser296, Ser299, and Ser302. The ETS DNA-binding region spans 364–444 (IQLWQFLLEL…SGKRYVYRFV (81 aa)).

The protein belongs to the ETS family. Post-translationally, phosphorylation by CDK10 at Ser-225 may create a phosphodegron that targets ETS2 for proteasomal degradation.

The protein resides in the nucleus. In terms of biological role, transcription factor activating transcription. Binds specifically the GGA DNA motif in gene promoters and stimulates transcription of those genes. The polypeptide is Protein C-ets-2 (ETS2) (Bos taurus (Bovine)).